The following is a 232-amino-acid chain: Large ribosomal subunit protein uL1 (232 aa).

This sequence belongs to the universal ribosomal protein uL1 family. In terms of assembly, part of the 50S ribosomal subunit.

In terms of biological role, binds directly to 23S rRNA. The L1 stalk is quite mobile in the ribosome, and is involved in E site tRNA release. Its function is as follows. Protein L1 is also a translational repressor protein, it controls the translation of the L11 operon by binding to its mRNA. This Rhizobium rhizogenes (strain K84 / ATCC BAA-868) (Agrobacterium radiobacter) protein is Large ribosomal subunit protein uL1.